The chain runs to 346 residues: 3-isopropylmalate dehydrogenase (346 aa).

Position 76–87 (76–87) interacts with NAD(+); the sequence is GPQWTDPNNRPE. 4 residues coordinate substrate: Arg94, Arg104, Arg132, and Asp217. Mg(2+)-binding residues include Asp217, Asp241, and Asp245. 275 to 287 is an NAD(+) binding site; it reads GSAPDIANQNLAN.

The protein belongs to the isocitrate and isopropylmalate dehydrogenases family. LeuB type 1 subfamily. As to quaternary structure, homodimer. The cofactor is Mg(2+). Requires Mn(2+) as cofactor.

The protein localises to the cytoplasm. The catalysed reaction is (2R,3S)-3-isopropylmalate + NAD(+) = 4-methyl-2-oxopentanoate + CO2 + NADH. It participates in amino-acid biosynthesis; L-leucine biosynthesis; L-leucine from 3-methyl-2-oxobutanoate: step 3/4. In terms of biological role, catalyzes the oxidation of 3-carboxy-2-hydroxy-4-methylpentanoate (3-isopropylmalate) to 3-carboxy-4-methyl-2-oxopentanoate. The product decarboxylates to 4-methyl-2 oxopentanoate. The protein is 3-isopropylmalate dehydrogenase of Staphylococcus haemolyticus (strain JCSC1435).